Reading from the N-terminus, the 201-residue chain is dITP/XTP pyrophosphatase (201 aa).

Position 7-12 (7-12 (TNNKGK)) interacts with substrate. Mg(2+) is bound by residues Glu40 and Asp69. Catalysis depends on Asp69, which acts as the Proton acceptor. Substrate is bound by residues Ser70, 152–155 (FGYD), Lys175, and 180–181 (HR).

It belongs to the HAM1 NTPase family. In terms of assembly, homodimer. It depends on Mg(2+) as a cofactor.

The catalysed reaction is XTP + H2O = XMP + diphosphate + H(+). The enzyme catalyses dITP + H2O = dIMP + diphosphate + H(+). It carries out the reaction ITP + H2O = IMP + diphosphate + H(+). Pyrophosphatase that catalyzes the hydrolysis of nucleoside triphosphates to their monophosphate derivatives, with a high preference for the non-canonical purine nucleotides XTP (xanthosine triphosphate), dITP (deoxyinosine triphosphate) and ITP. Seems to function as a house-cleaning enzyme that removes non-canonical purine nucleotides from the nucleotide pool, thus preventing their incorporation into DNA/RNA and avoiding chromosomal lesions. This Desulforamulus reducens (strain ATCC BAA-1160 / DSM 100696 / MI-1) (Desulfotomaculum reducens) protein is dITP/XTP pyrophosphatase.